A 106-amino-acid polypeptide reads, in one-letter code: Large ribosomal subunit protein eL42 (106 aa).

Residues 36 to 56 (FAQGKRRYDRKQSGYGGQTKP) form a disordered region.

The protein belongs to the eukaryotic ribosomal protein eL42 family.

This chain is Large ribosomal subunit protein eL42 (RPL44), found in Coprinopsis cinerea (strain Okayama-7 / 130 / ATCC MYA-4618 / FGSC 9003) (Inky cap fungus).